Here is a 92-residue protein sequence, read N- to C-terminus: Transcription factor S4 (92 aa).

The segment at 1–31 (MRFCPKCGSFLKVKGNKMVCSKCGYSDHDVE) is ZR-N. Cys4, Cys7, Cys20, and Cys23 together coordinate Zn(2+). A flexible linker region spans residues 32–56 (KVILKENVAHENDKTIIADGETIEG). The ZR-C stretch occupies residues 55–92 (EGRVAISLCPRCGSVRAILLNKKKRLYRCMTCNFVYNI). Cys63 and Cys66 together coordinate Zn(2+). Active-site residues include Lys76, Lys77, and Lys78. Positions 83 and 86 each coordinate Zn(2+).

This sequence belongs to the archaeal RpoM/eukaryotic RPA12/RPB9/RPC11 RNA polymerase family. Interacts with RNA polymerase. The cofactor is Zn(2+).

Functionally, a potent inhibitor of RNA polymerase (RNAP) probably involved in viral defense. Destabilizes the transcription pre-initiation complex of TBP, TFB, DNA and RNAP, inhibits abortive transcription initiation, productive initiation and transcription elongation. Increases the RNAP KM for NTPs about 50-fold. Overexpression of TFS1-tip4 (TFS1 with the active tip of this protein, phenocopies this protein) in S.acidocaldarius MW001 leads to severe growth inhibition. When bound to RNAP induces conformational changes that widen the DNA-binding channel, probably destabilizing the interaction of DNA with RNAP. The polypeptide is Transcription factor S4 (Saccharolobus solfataricus (strain ATCC 35092 / DSM 1617 / JCM 11322 / P2) (Sulfolobus solfataricus)).